A 2035-amino-acid polypeptide reads, in one-letter code: Ral GTPase-activating protein subunit alpha-1 (2035 aa).

Disordered stretches follow at residues 343 to 384 and 477 to 496; these read LVSR…SSLC and DGEKREEENGTSTSEHVRNS. Positions 345–365 are enriched in basic and acidic residues; sequence SREESKNDTVDKVDKSAEPEQ. Composition is skewed to polar residues over residues 366 to 384 and 486 to 496; these read SHSNTSTLTEREPSSSSLC and GTSTSEHVRNS. A phosphoserine mark is found at Ser710 and Ser720. Residues 714–752 are disordered; that stretch reads SFSRGWSRDQPGQAPMRQRSATTTGSPGTEKARSIVRQK. Thr753 bears the Phosphothreonine mark. Ser772 is modified (phosphoserine). Thr777 bears the Phosphothreonine mark. Ser796 carries the phosphoserine modification. The segment covering 807-817 has biased composition (basic and acidic residues); the sequence is ERAKVNKEDTS. 2 disordered regions span residues 807-834 and 848-911; these read ERAKVNKEDTSPKLPPLNSETGGNSANV and SGNA…SHSD. Composition is skewed to polar residues over residues 824 to 833 and 849 to 862; these read NSETGGNSAN and GNASTMTRRGSSPG. Phosphoserine is present on residues Ser859, Ser860, and Ser863. The segment covering 894–911 has biased composition (low complexity); it reads SPASAGSSDLMSSDSHSD. Residues Ser985, Ser989, Ser993, and Ser999 each carry the phosphoserine modification. Positions 986–1008 are enriched in polar residues; that stretch reads ESASPVHSALGSRSQTPSPSTLS. Positions 986–1011 are disordered; the sequence is ESASPVHSALGSRSQTPSPSTLSRAH. Thr1001 is subject to Phosphothreonine. A phosphoserine mark is found at Ser1003 and Ser1477. Residues 1326–2035 form a minimal domain that binds to TCF3/E12 region; sequence FTNKTVAHVA…YHHFPADADH (710 aa). Residues 1713–1748 adopt a coiled-coil conformation; sequence SEKQENDVINAILKQYTEEKEFVEKHFNDLNMKASE. The 209-residue stretch at 1795-2003 folds into the Rap-GAP domain; it reads LRNLDSRQCR…EERARYLQTI (209 aa).

Component of the heterodimeric RalGAP1 complex with RALGAPB. Heterodimerization is required for activity. Interacts with the HLH region of TCF3/isoform E12. As to expression, expressed during embryogenesis. Expressed in the adult brain, particularly in neurons of the cortex and hippocampus.

Its subcellular location is the cytoplasm. The protein localises to the nucleus. Its function is as follows. Catalytic subunit of the heterodimeric RalGAP1 complex which acts as a GTPase activator for the Ras-like small GTPases RALA and RALB. May interact with the HLH region of TCF3/isoform E12. In Mus musculus (Mouse), this protein is Ral GTPase-activating protein subunit alpha-1 (Ralgapa1).